Here is a 67-residue protein sequence, read N- to C-terminus: Potassium channel toxin alpha-KTx (67 aa).

The N-terminal stretch at Met-1 to Ala-25 is a signal peptide. Positions Asp-26–Arg-31 are excised as a propeptide. Cystine bridges form between Cys-35–Cys-54, Cys-40–Cys-59, Cys-44–Cys-61, and Cys-49–Cys-64.

Belongs to the short scorpion toxin superfamily. Potassium channel inhibitor family. As to expression, expressed by the venom gland.

The protein localises to the secreted. Blocks Kv1.1/KCNA1, Kv1.2/KCNA2 and Kv1.3/KCNA3 voltage-gated potassium channels. The sequence is that of Potassium channel toxin alpha-KTx from Hoffmannihadrurus gertschi (Scorpion).